Reading from the N-terminus, the 318-residue chain is ADP-L-glycero-D-manno-heptose-6-epimerase (318 aa).

Residues 10-11, 31-32, lysine 38, lysine 53, 76-80, and asparagine 93 each bind NADP(+); these read FI, DN, and QGACS. Catalysis depends on tyrosine 141, which acts as the Proton acceptor. Lysine 145 lines the NADP(+) pocket. A substrate-binding site is contributed by asparagine 172. The NADP(+) site is built by valine 173 and lysine 181. The active-site Proton acceptor is the lysine 181. Residues arginine 183, histidine 190, 204–207, arginine 212, and tyrosine 276 contribute to the substrate site; that span reads FEGS.

It belongs to the NAD(P)-dependent epimerase/dehydratase family. HldD subfamily. Homopentamer. NADP(+) is required as a cofactor.

The catalysed reaction is ADP-D-glycero-beta-D-manno-heptose = ADP-L-glycero-beta-D-manno-heptose. Its pathway is nucleotide-sugar biosynthesis; ADP-L-glycero-beta-D-manno-heptose biosynthesis; ADP-L-glycero-beta-D-manno-heptose from D-glycero-beta-D-manno-heptose 7-phosphate: step 4/4. Functionally, catalyzes the interconversion between ADP-D-glycero-beta-D-manno-heptose and ADP-L-glycero-beta-D-manno-heptose via an epimerization at carbon 6 of the heptose. This is ADP-L-glycero-D-manno-heptose-6-epimerase from Brachyspira hyodysenteriae (strain ATCC 49526 / WA1).